We begin with the raw amino-acid sequence, 203 residues long: Small ribosomal subunit protein uS4 (203 aa).

An S4 RNA-binding domain is found at 93–173 (RRLDNVVFRS…FPSWIQVDKA (81 aa)).

The protein belongs to the universal ribosomal protein uS4 family. As to quaternary structure, part of the 30S ribosomal subunit. Contacts protein S5. The interaction surface between S4 and S5 is involved in control of translational fidelity.

In terms of biological role, one of the primary rRNA binding proteins, it binds directly to 16S rRNA where it nucleates assembly of the body of the 30S subunit. Its function is as follows. With S5 and S12 plays an important role in translational accuracy. This Chlorobium limicola (strain DSM 245 / NBRC 103803 / 6330) protein is Small ribosomal subunit protein uS4.